A 631-amino-acid polypeptide reads, in one-letter code: Eukaryotic translation initiation factor 3 subunit L (631 aa).

Residues 335–526 (TFVSVLIFFI…AETTLLDGER (192 aa)) form the PCI domain. Positions 571 to 631 (KSAPLPVRKP…PKSRQARIAA (61 aa)) are disordered. Low complexity predominate over residues 580–612 (PASSSAPAPATTAAPISKSGESAAPAPAEAPAA).

This sequence belongs to the eIF-3 subunit L family. Component of the eukaryotic translation initiation factor 3 (eIF-3) complex.

The protein resides in the cytoplasm. Its function is as follows. Component of the eukaryotic translation initiation factor 3 (eIF-3) complex, which is involved in protein synthesis of a specialized repertoire of mRNAs and, together with other initiation factors, stimulates binding of mRNA and methionyl-tRNAi to the 40S ribosome. The eIF-3 complex specifically targets and initiates translation of a subset of mRNAs involved in cell proliferation. The polypeptide is Eukaryotic translation initiation factor 3 subunit L (Cryptococcus neoformans var. neoformans serotype D (strain B-3501A) (Filobasidiella neoformans)).